The primary structure comprises 240 residues: Ribose-5-phosphate isomerase A (240 aa).

Substrate contacts are provided by residues 41–44 (TGST), 94–97 (DGAD), and 107–110 (KGGG). Glu-116 acts as the Proton acceptor in catalysis. Lys-134 is a binding site for substrate.

This sequence belongs to the ribose 5-phosphate isomerase family. Homodimer.

It carries out the reaction aldehydo-D-ribose 5-phosphate = D-ribulose 5-phosphate. The protein operates within carbohydrate degradation; pentose phosphate pathway; D-ribose 5-phosphate from D-ribulose 5-phosphate (non-oxidative stage): step 1/1. In terms of biological role, catalyzes the reversible conversion of ribose-5-phosphate to ribulose 5-phosphate. In Polaromonas sp. (strain JS666 / ATCC BAA-500), this protein is Ribose-5-phosphate isomerase A.